The following is a 132-amino-acid chain: Small ribosomal subunit protein uS8 (132 aa).

This sequence belongs to the universal ribosomal protein uS8 family. Part of the 30S ribosomal subunit. Contacts proteins S5 and S12.

Functionally, one of the primary rRNA binding proteins, it binds directly to 16S rRNA central domain where it helps coordinate assembly of the platform of the 30S subunit. The chain is Small ribosomal subunit protein uS8 from Xanthobacter autotrophicus (strain ATCC BAA-1158 / Py2).